Consider the following 754-residue polypeptide: Peptidyl-prolyl cis-trans isomerase G (754 aa).

The PPIase cyclophilin-type domain occupies 11–176 (FFDIAINNQP…AEVRILSCGE (166 aa)). Basic residues predominate over residues 182–193 (KVKKEEKKRHKS). A disordered region spans residues 182 to 754 (KVKKEEKKRH…SPGTDEDKSG (573 aa)). A compositionally biased stretch (low complexity) spans 194 to 216 (SSSSSSSSSDSDSSSDSQSSSDS). Positions 228 to 253 (KKRKKKHRKNSRKHKKEKKKRKKSKK) are enriched in basic residues. Phosphoserine occurs at positions 254, 256, 257, 259, and 290. The span at 292 to 310 (PKADEKERKNREREREREC) shows a compositional bias: basic and acidic residues. Serine 315 is subject to Phosphoserine. Basic residues predominate over residues 329 to 347 (SGRKIKGRGPRRYRTPSRS). 2 stretches are compositionally biased toward basic and acidic residues: residues 348–368 (RSRDRFRRSETPPHWRQEMQR) and 379–449 (RWIK…DKYK). Serine 356 is subject to Phosphoserine. At threonine 358 the chain carries Phosphothreonine. Position 386 is a phosphoserine (serine 386). Lysine 392 participates in a covalent cross-link: Glycyl lysine isopeptide (Lys-Gly) (interchain with G-Cter in SUMO2). Residues serine 397, serine 413, and serine 415 each carry the phosphoserine modification. Over residues 450–462 (NKVKKRAKSKSRS) the composition is skewed to basic residues. Basic and acidic residues-rich tracts occupy residues 463 to 553 (KSKE…DITK) and 578 to 599 (RTHDRDRSRSKEYHRYREQEYR). Basic residues predominate over residues 616-627 (SRSKDRRRRRRD). Residues 628–686 (SRSSEREESQSRNKDKYRNQESKSSHRKENSESEKRMYSKSRDHNSSNNSREKKADRDQ) are compositionally biased toward basic and acidic residues. Phosphoserine occurs at positions 687 and 690. The segment covering 687-698 (SPFSKIKQSSQD) has biased composition (polar residues). A Glycyl lysine isopeptide (Lys-Gly) (interchain with G-Cter in SUMO2) cross-link involves residue lysine 693. A phosphoserine mark is found at serine 696, serine 744, and serine 745. The span at 707-754 (KNKEDEKIRSSVEKENQKSKGQENDHVHEKNKKFDHESSPGTDEDKSG) shows a compositional bias: basic and acidic residues. The residue at position 748 (threonine 748) is a Phosphothreonine. Residue serine 753 is modified to Phosphoserine.

Interacts with CLK1, PNN and with the phosphorylated C-terminal domain of RNA polymerase II. Ubiquitous.

The protein resides in the nucleus matrix. It localises to the nucleus speckle. The enzyme catalyses [protein]-peptidylproline (omega=180) = [protein]-peptidylproline (omega=0). With respect to regulation, inhibited by cyclosporin A (CsA). Functionally, PPIase that catalyzes the cis-trans isomerization of proline imidic peptide bonds in oligopeptides and may therefore assist protein folding. May be implicated in the folding, transport, and assembly of proteins. May play an important role in the regulation of pre-mRNA splicing. This Homo sapiens (Human) protein is Peptidyl-prolyl cis-trans isomerase G (PPIG).